Reading from the N-terminus, the 385-residue chain is Phosphatidate cytidylyltransferase, mitochondrial (385 aa).

It belongs to the TAM41 family. Requires Mg(2+) as cofactor. Co(2+) serves as cofactor. It depends on Cu(2+) as a cofactor.

Its subcellular location is the mitochondrion inner membrane. The enzyme catalyses a 1,2-diacyl-sn-glycero-3-phosphate + CTP + H(+) = a CDP-1,2-diacyl-sn-glycerol + diphosphate. Its pathway is phospholipid metabolism; CDP-diacylglycerol biosynthesis; CDP-diacylglycerol from sn-glycerol 3-phosphate: step 3/3. Its function is as follows. Catalyzes the formation of CDP-diacylglycerol (CDP-DAG) from phosphatidic acid (PA) in the mitochondrial inner membrane. Required for the biosynthesis of the dimeric phospholipid cardiolipin, which stabilizes supercomplexes of the mitochondrial respiratory chain in the mitochondrial inner membrane. This Saccharomyces cerevisiae (strain ATCC 204508 / S288c) (Baker's yeast) protein is Phosphatidate cytidylyltransferase, mitochondrial (TAM41).